A 283-amino-acid polypeptide reads, in one-letter code: Protein ATAF2 (283 aa).

One can recognise an NAC domain in the interval 7–159; the sequence is LPAGFRFHPT…DWVLCRIYNK (153 aa). The DNA-binding element occupies 103-165; it reads LGIKKALVFY…IYNKKGTMEK (63 aa). A disordered region spans residues 171-211; it reads EKPRTTTMAEQSSSPFDTSDSTYPTLQEDDSSSSGGHGHVV. The span at 175–195 shows a compositional bias: polar residues; that stretch reads TTTMAEQSSSPFDTSDSTYPT.

As to quaternary structure, homodimer. Interacts with AHK2. Interacts with AHL12 and AHL27. Interacts with the helicase domain of the tobamovirus (TMV) replicase. Expressed in roots, cotyledons, rosette leaves, cauline leaves and mature flowers. Expressed at low levels in stems and flower buds.

The protein localises to the nucleus. Functionally, involved in disease resistance response. May function as repressor of pathogenesis-related proteins. May function in the regulation of host basal defense responses against viral infection. Transcriptional activator involved in responses to wounding and infection with tobamovirus (TMV). Binds to the DNA sequences 5'-AAAATATCT-3' and 5'AGATTTTT-3' of CYP734A1/BAS1 and CYP72C1/SOB7 promoters, respectively. Acts as a suppressor of the brassinosteroid (BR)-inactivating enzymes CYP734A1/BAS1 and CYP72C1/SOB7, and prevents their expression in almost all tissues. Plays a central role in integrating BR homeostasis and seedling development. Regulates the spatial regulation of BR homeostasis and participates in the regulation of hypocotyl elongation and root growth by suppressing BR catabolism. Mediates connection between BR catabolism and photomorphogenesis. Binds to, and transactivates the promoter of the auxin biosynthetic gene NIT2. Stress-responsive NAC transcription factor involved in ABA-inducible leaf senescence signaling. Required for normal seed development and morphology. This is Protein ATAF2 (NAC081) from Arabidopsis thaliana (Mouse-ear cress).